A 496-amino-acid polypeptide reads, in one-letter code: Glutamate--cysteine ligase B, chloroplastic (496 aa).

Residues 1-34 (MAVASRLAVARVAPDGGAAGRRRRRRGRPVVAVP) constitute a chloroplast transit peptide. Residues 14–53 (PDGGAAGRRRRRRGRPVVAVPTAAGRGRGRGGAVAASPPT) form a disordered region. The span at 29 to 38 (PVVAVPTAAG) shows a compositional bias: low complexity. An intrachain disulfide couples cysteine 160 to cysteine 380.

Belongs to the carboxylate-amine ligase family. Glutamate--cysteine ligase type 2 subfamily. As to quaternary structure, homodimer or monomer when oxidized or reduced, respectively. The Cys-160-Cys-380 disulfide bridge is known to modulate the enzyme activity according to the redox status. The oxidized form constitutes the active enzyme.

It localises to the plastid. It is found in the chloroplast. It catalyses the reaction L-cysteine + L-glutamate + ATP = gamma-L-glutamyl-L-cysteine + ADP + phosphate + H(+). It functions in the pathway sulfur metabolism; glutathione biosynthesis; glutathione from L-cysteine and L-glutamate: step 1/2. This chain is Glutamate--cysteine ligase B, chloroplastic (GSH1-2), found in Oryza sativa subsp. japonica (Rice).